Reading from the N-terminus, the 122-residue chain is Large ribosomal subunit protein uL14 (122 aa).

The protein belongs to the universal ribosomal protein uL14 family. As to quaternary structure, part of the 50S ribosomal subunit. Forms a cluster with proteins L3 and L19. In the 70S ribosome, L14 and L19 interact and together make contacts with the 16S rRNA in bridges B5 and B8.

Its function is as follows. Binds to 23S rRNA. Forms part of two intersubunit bridges in the 70S ribosome. The protein is Large ribosomal subunit protein uL14 of Frankia alni (strain DSM 45986 / CECT 9034 / ACN14a).